Here is a 111-residue protein sequence, read N- to C-terminus: Regulator of ribonuclease activity B (111 aa).

This sequence belongs to the RraB family. In terms of assembly, interacts with the C-terminal region of Rne.

It is found in the cytoplasm. Functionally, globally modulates RNA abundance by binding to RNase E (Rne) and regulating its endonucleolytic activity. Can modulate Rne action in a substrate-dependent manner by altering the composition of the degradosome. This chain is Regulator of ribonuclease activity B, found in Pseudoalteromonas translucida (strain TAC 125).